Consider the following 403-residue polypeptide: Aspartic protease pepA (403 aa).

An N-terminal signal peptide occupies residues 1-20 (MVLITQLGAALAVFSALTVA). Positions 21-67 (APTKGKARFSAPQVGIPKKAKHHPAAAYARALHKFGMKIPKAVSDAA) are cleaved as a propeptide — activation peptide. The region spanning 82–400 (YVTQVTVGGS…DTQGPRIGFA (319 aa)) is the Peptidase A1 domain. Asp98 is an active-site residue. Asn270 carries an N-linked (GlcNAc...) asparagine glycan. The active site involves Asp293. Cys329 and Cys362 are joined by a disulfide.

Belongs to the peptidase A1 family. In terms of assembly, monomer.

Its subcellular location is the secreted. Secreted aspartic endopeptidase that allows assimilation of proteinaceous substrates. The scissile peptide bond is attacked by a nucleophilic water molecule activated by two aspartic residues in the active site. Shows a broad primary substrate specificity. Favors hydrophobic residues at the P1 and P1' positions. The sequence is that of Aspartic protease pepA from Arthroderma gypseum (strain ATCC MYA-4604 / CBS 118893) (Microsporum gypseum).